The following is a 546-amino-acid chain: Parathyroid hormone 2 receptor (546 aa).

The signal sequence occupies residues 1–24; that stretch reads MAWLETFTYICGWLILSSCLLVRA. Over 27-143 the chain is Extracellular; sequence DSDGTITIEE…GKQEFFESLY (117 aa). N-linked (GlcNAc...) asparagine glycosylation is found at Asn51, Asn106, Asn116, and Asn121. A helical transmembrane segment spans residues 144 to 167; sequence ILYTVGYSISFGSLAVAILIIGYF. Over 168 to 174 the chain is Cytoplasmic; it reads RRLHCTR. The helical transmembrane segment at 175-194 threads the bilayer; it reads NYIHLHLFVSFMLRAMSIFV. At 195–235 the chain is on the extracellular side; that stretch reads KDRVAQAHLGVEALQSLVMQGDLQNFIGGPSVDKSQYVGCK. A helical membrane pass occupies residues 236 to 258; it reads IAVVMFIYFLATNYYWILVEGLY. The Cytoplasmic portion of the chain corresponds to 259-273; that stretch reads LHNLIFVSFFSDTKY. A helical transmembrane segment spans residues 274 to 295; that stretch reads LWGFISIGWGFPAVFVVAWAVA. The Extracellular portion of the chain corresponds to 296–313; it reads RATLADTRCWELSAGDRW. Residues 314–334 traverse the membrane as a helical segment; sequence IYQAPILAAIGLNFILFLNTV. Over 335–361 the chain is Cytoplasmic; sequence RVLATKIWETNAVGHDMRKQYRKLAKS. A helical membrane pass occupies residues 362–380; that stretch reads TLVLVLVFGVHYIVFVCQP. Topologically, residues 381-391 are extracellular; that stretch reads HSFSGLWWEIR. Residues 392 to 414 form a helical membrane-spanning segment; the sequence is MHCELFFNSFQGFFVSIVYCYCN. Residues 415-546 are Cytoplasmic-facing; the sequence is GEVQAEVKKM…EGCKGETHPI (132 aa). Residues 497 to 546 form a disordered region; sequence SEQDCQTHSPPEETKEGHRRQGDDSPVMESSRPVAFTLDTEGCKGETHPI. Basic and acidic residues-rich tracts occupy residues 506-519 and 537-546; these read PPEE…RQGD and EGCKGETHPI.

This sequence belongs to the G-protein coupled receptor 2 family. As to quaternary structure, binds to TIPF39/TIP39.

It localises to the cell membrane. Its function is as follows. This is a specific receptor for parathyroid hormone. The activity of this receptor is mediated by G proteins which activate adenylyl cyclase. PTH2R may be responsible for PTH effects in a number of physiological systems. It may play a significant role in pancreatic function. PTH2R presence in neurons indicates that it may function as a neurotransmitter receptor. In Mus musculus (Mouse), this protein is Parathyroid hormone 2 receptor (Pth2r).